The primary structure comprises 238 residues: Small ribosomal subunit protein uS2c (238 aa).

Belongs to the universal ribosomal protein uS2 family.

The protein localises to the plastid. It localises to the chloroplast. The polypeptide is Small ribosomal subunit protein uS2c (rps2) (Oltmannsiellopsis viridis (Marine flagellate)).